A 427-amino-acid chain; its full sequence is Indole diterpene prenyltransferase ptmD (427 aa).

77–78 (YV) is a binding site for L-tryptophan. Residues arginine 99, lysine 186, tyrosine 188, arginine 259, lysine 261, tyrosine 263, tyrosine 344, tyrosine 409, and tyrosine 413 each contribute to the substrate site.

This sequence belongs to the tryptophan dimethylallyltransferase family.

Its pathway is secondary metabolite biosynthesis. In terms of biological role, indole diterpene prenyltransferase; part of the gene cluster that mediates the biosynthesis of the indole diterpenes penitrems. The geranylgeranyl diphosphate (GGPP) synthase ptmG catalyzes the first step in penitrem biosynthesis via conversion of farnesyl pyrophosphate and isopentyl pyrophosphate into geranylgeranyl pyrophosphate (GGPP). Condensation of indole-3-glycerol phosphate with GGPP by the prenyl transferase ptmC then forms 3-geranylgeranylindole (3-GGI). Epoxidation by the FAD-dependent monooxygenase ptmM leads to a epoxidized-GGI that is substrate of the terpene cyclase ptmB for cyclization to yield paspaline. Paspaline is subsequently converted to 13-desoxypaxilline by the cytochrome P450 monooxygenase ptmP, the latter being then converted to paxilline by the cytochrome P450 monooxygenase ptmQ. Paxilline is converted to beta-paxitriol via C-10 ketoreduction by the short-chain dehydrogenase ptmH which can be monoprenylated at the C-20 by the indole diterpene prenyltransferase ptmD. A two-step elimination (acetylation and elimination) process performed by the O-acetyltransferase ptmV and ptmI leads to the production of the prenylated form of penijanthine. The FAD-linked oxidoreductase ptmO then converts the prenylated form of penijanthine into PC-M5 which is in turn transformed into PC-M4 by the aromatic dimethylallyltransferase ptmE. Five sequential oxidative transformations performed by the cytochrome P450 monooxygenases ptmK, ptmU, ptmL, ptmN and ptmJ yield the various penitrem compounds. PtmK, ptmU and ptmM are involved in the formation of the key bicyclic ring of penitrem C via the formation of the intermediates secopenitrem D and penitrem D. PtmL catalyzes the epoxidation of penitrem D and C to yield penitrem B and F, respectively. PtmJ catalyzes the last benzylic hydroxylation to convert penitrem B to prenitrem E and penitrem F to penitrem A. This Penicillium ochrochloron protein is Indole diterpene prenyltransferase ptmD.